A 278-amino-acid polypeptide reads, in one-letter code: MLQFIRHYLLAVQFFTRIPVTGRLADWVGYSPGMLRASAVHFPGIGVVVGGAAAAMFALLQLLLPDTTFTPLVAAAFSTVATVWLTGGFHEDGLADVADGLGGSYDRERALEIMKDSRVGAFGAMALVLALLCKVALLALLGSVEAVPEAGEAPAFSSWYVCAALWTGHIVSRGLPLVMIWRLPHVGDIAISKSKPLADQISAGGLAIAFSWCFGALALASLALDAINLIVACGFSVLALLGLLRFFRRRLQGFTGDCLGTTQQVCEIAFYLGLAVSL.

Helical transmembrane passes span 44–64, 69–89, 121–141, 161–181, 204–224, and 227–247; these read GIGV…QLLL, FTPL…TGGF, AFGA…LALL, VCAA…VMIW, GGLA…SLAL, and INLI…LRFF.

It belongs to the CobS family. The cofactor is Mg(2+).

The protein localises to the cell inner membrane. The enzyme catalyses alpha-ribazole + adenosylcob(III)inamide-GDP = adenosylcob(III)alamin + GMP + H(+). The catalysed reaction is alpha-ribazole 5'-phosphate + adenosylcob(III)inamide-GDP = adenosylcob(III)alamin 5'-phosphate + GMP + H(+). It participates in cofactor biosynthesis; adenosylcobalamin biosynthesis; adenosylcobalamin from cob(II)yrinate a,c-diamide: step 7/7. In terms of biological role, joins adenosylcobinamide-GDP and alpha-ribazole to generate adenosylcobalamin (Ado-cobalamin). Also synthesizes adenosylcobalamin 5'-phosphate from adenosylcobinamide-GDP and alpha-ribazole 5'-phosphate. The chain is Adenosylcobinamide-GDP ribazoletransferase from Polaromonas naphthalenivorans (strain CJ2).